We begin with the raw amino-acid sequence, 228 residues long: Protein-L-isoaspartate O-methyltransferase (228 aa).

Positions 1–20 (MVAVSLKMSQPAAPPPPMGE) are disordered. S76 is a catalytic residue.

It belongs to the methyltransferase superfamily. L-isoaspartyl/D-aspartyl protein methyltransferase family.

The protein localises to the cytoplasm. It carries out the reaction [protein]-L-isoaspartate + S-adenosyl-L-methionine = [protein]-L-isoaspartate alpha-methyl ester + S-adenosyl-L-homocysteine. Functionally, catalyzes the methyl esterification of L-isoaspartyl residues in peptides and proteins that result from spontaneous decomposition of normal L-aspartyl and L-asparaginyl residues. It plays a role in the repair and/or degradation of damaged proteins. The protein is Protein-L-isoaspartate O-methyltransferase of Magnetococcus marinus (strain ATCC BAA-1437 / JCM 17883 / MC-1).